We begin with the raw amino-acid sequence, 305 residues long: Homoserine O-acetyltransferase (305 aa).

Cysteine 142 serves as the catalytic Acyl-thioester intermediate. Residues lysine 163 and serine 192 each contribute to the substrate site. The active-site Proton acceptor is the histidine 235. Glutamate 237 is an active-site residue. Residue arginine 249 participates in substrate binding.

It belongs to the MetA family.

The protein localises to the cytoplasm. It carries out the reaction L-homoserine + acetyl-CoA = O-acetyl-L-homoserine + CoA. The protein operates within amino-acid biosynthesis; L-methionine biosynthesis via de novo pathway; O-acetyl-L-homoserine from L-homoserine: step 1/1. Its function is as follows. Transfers an acetyl group from acetyl-CoA to L-homoserine, forming acetyl-L-homoserine. The chain is Homoserine O-acetyltransferase from Phocaeicola vulgatus (strain ATCC 8482 / DSM 1447 / JCM 5826 / CCUG 4940 / NBRC 14291 / NCTC 11154) (Bacteroides vulgatus).